The following is an 827-amino-acid chain: Probable beta-glucosidase H (827 aa).

Asp-223 is a catalytic residue. Residues Arg-387–Val-546 enclose the PA14 domain. Residues Asn-471, Asn-594, Asn-600, and Asn-625 are each glycosylated (N-linked (GlcNAc...) asparagine).

The protein belongs to the glycosyl hydrolase 3 family.

The protein resides in the secreted. The catalysed reaction is Hydrolysis of terminal, non-reducing beta-D-glucosyl residues with release of beta-D-glucose.. It functions in the pathway glycan metabolism; cellulose degradation. Its function is as follows. Beta-glucosidases are one of a number of cellulolytic enzymes involved in the degradation of cellulosic biomass. Catalyzes the last step releasing glucose from the inhibitory cellobiose. The chain is Probable beta-glucosidase H (bglH) from Aspergillus oryzae (strain ATCC 42149 / RIB 40) (Yellow koji mold).